The following is a 71-amino-acid chain: Large ribosomal subunit protein bL31 (71 aa).

The Zn(2+) site is built by Cys16, Cys18, Cys36, and Cys39.

It belongs to the bacterial ribosomal protein bL31 family. Type A subfamily. Part of the 50S ribosomal subunit. The cofactor is Zn(2+).

Binds the 23S rRNA. This is Large ribosomal subunit protein bL31 from Syntrophus aciditrophicus (strain SB).